Reading from the N-terminus, the 138-residue chain is Translation initiation factor 2 subunit beta (138 aa).

It belongs to the eIF-2-beta/eIF-5 family. In terms of assembly, heterotrimer composed of an alpha, a beta and a gamma chain.

EIF-2 functions in the early steps of protein synthesis by forming a ternary complex with GTP and initiator tRNA. The sequence is that of Translation initiation factor 2 subunit beta from Methanococcus maripaludis (strain C6 / ATCC BAA-1332).